Here is a 545-residue protein sequence, read N- to C-terminus: Periplasmic trehalase (545 aa).

Residues 1 to 30 (MPDRTALPRAMLAAWVLLLLAACSQGPAPT) form the signal peptide. Substrate is bound by residues Arg-160, 167–168 (WD), Asn-204, 213–215 (RSQ), 285–287 (RQE), and Gly-318. Residues Asp-320 and Glu-503 each act as proton donor/acceptor in the active site. Glu-518 lines the substrate pocket.

The protein belongs to the glycosyl hydrolase 37 family.

It is found in the periplasm. The enzyme catalyses alpha,alpha-trehalose + H2O = alpha-D-glucose + beta-D-glucose. In terms of biological role, provides the cells with the ability to utilize trehalose at high osmolarity by splitting it into glucose molecules that can subsequently be taken up by the phosphotransferase-mediated uptake system. In Pseudomonas aeruginosa (strain ATCC 15692 / DSM 22644 / CIP 104116 / JCM 14847 / LMG 12228 / 1C / PRS 101 / PAO1), this protein is Periplasmic trehalase.